A 459-amino-acid polypeptide reads, in one-letter code: UDP-N-acetylmuramate--L-alanine ligase (459 aa).

113–119 provides a ligand contact to ATP; sequence GSHGKTT.

The protein belongs to the MurCDEF family.

It is found in the cytoplasm. It carries out the reaction UDP-N-acetyl-alpha-D-muramate + L-alanine + ATP = UDP-N-acetyl-alpha-D-muramoyl-L-alanine + ADP + phosphate + H(+). It functions in the pathway cell wall biogenesis; peptidoglycan biosynthesis. Functionally, cell wall formation. The protein is UDP-N-acetylmuramate--L-alanine ligase of Persephonella marina (strain DSM 14350 / EX-H1).